We begin with the raw amino-acid sequence, 99 residues long: Protein Frey (99 aa).

The chain crosses the membrane as a helical span at residues 13–29; the sequence is AGLSLFALYLVLAAALL. The disordered stretch occupies residues 64-90; sequence RPKHPWPRGPRPLLSRAQQRKRDGPDM.

Interacts with SPPL2C (via active sites); the interaction stabilizes FREY1 protein and inhibits SPPL2C proteolytic activity. Interacts with IZUMO1; the interaction retains IZUMO1 at the endoplasmic reticulum membrane and coordinates IZUMO1 complex assembly.

It localises to the endoplasmic reticulum membrane. Functionally, key regulator for male fertility expressed transiently in round spermatids where it recruits IZUMO1 at the endoplasmic reticulum (ER) membrane and coordinates the oolemmal binding multimeric complex (IZUMO1 complex) assembly. Upon complete assembly of the IZUMO1 complex, its ER retention is released, facilitating IZUMO1 complex export to the acrosome. Through the interaction with SPPL2C, inhibits its intramembrane protease activity directly accessing the catalytic center of an I-CLiP. This is Protein Frey (FREY1) from Bos taurus (Bovine).